The following is a 328-amino-acid chain: uncharacterized protein (328 aa).

A Phosphoserine modification is found at serine 170.

The protein resides in the cytoplasm. The protein localises to the nucleus. This is an uncharacterized protein from Schizosaccharomyces pombe (strain 972 / ATCC 24843) (Fission yeast).